The primary structure comprises 303 residues: N-acetylmuramic acid 6-phosphate etherase (303 aa).

The SIS domain maps to 61 to 224 (IVQAFQQGGR…TTASMILLGK (164 aa)). Residue Glu89 is the Proton donor of the active site. Glu120 is a catalytic residue.

The protein belongs to the GCKR-like family. MurNAc-6-P etherase subfamily. Homodimer.

The catalysed reaction is N-acetyl-D-muramate 6-phosphate + H2O = N-acetyl-D-glucosamine 6-phosphate + (R)-lactate. It participates in amino-sugar metabolism; 1,6-anhydro-N-acetylmuramate degradation. Its pathway is amino-sugar metabolism; N-acetylmuramate degradation. The protein operates within cell wall biogenesis; peptidoglycan recycling. Functionally, specifically catalyzes the cleavage of the D-lactyl ether substituent of MurNAc 6-phosphate, producing GlcNAc 6-phosphate and D-lactate. Together with AnmK, is also required for the utilization of anhydro-N-acetylmuramic acid (anhMurNAc) either imported from the medium or derived from its own cell wall murein, and thus plays a role in cell wall recycling. This is N-acetylmuramic acid 6-phosphate etherase (murQ) from Haemophilus influenzae (strain ATCC 51907 / DSM 11121 / KW20 / Rd).